We begin with the raw amino-acid sequence, 185 residues long: CDP-diacylglycerol--glycerol-3-phosphate 3-phosphatidyltransferase (185 aa).

The next 4 helical transmembrane spans lie at 7–26, 33–52, 89–108, and 151–172; these read IFLT…AFYL, FITT…DGYL, FWIT…ISAL, and IAAI…IQYL.

Belongs to the CDP-alcohol phosphatidyltransferase class-I family.

The protein localises to the cell membrane. The enzyme catalyses a CDP-1,2-diacyl-sn-glycerol + sn-glycerol 3-phosphate = a 1,2-diacyl-sn-glycero-3-phospho-(1'-sn-glycero-3'-phosphate) + CMP + H(+). Its pathway is phospholipid metabolism; phosphatidylglycerol biosynthesis; phosphatidylglycerol from CDP-diacylglycerol: step 1/2. Functionally, this protein catalyzes the committed step to the synthesis of the acidic phospholipids. This Haemophilus influenzae (strain ATCC 51907 / DSM 11121 / KW20 / Rd) protein is CDP-diacylglycerol--glycerol-3-phosphate 3-phosphatidyltransferase (pgsA).